The sequence spans 267 residues: Glutamate racemase (267 aa).

Substrate is bound by residues 13–14 (DS) and 45–46 (YG). Catalysis depends on C77, which acts as the Proton donor/acceptor. Residue 78–79 (NT) participates in substrate binding. C192 acts as the Proton donor/acceptor in catalysis. Residue 193-194 (TH) coordinates substrate.

The protein belongs to the aspartate/glutamate racemases family.

The catalysed reaction is L-glutamate = D-glutamate. The protein operates within cell wall biogenesis; peptidoglycan biosynthesis. Provides the (R)-glutamate required for cell wall biosynthesis. This is Glutamate racemase from Sinorhizobium fredii (strain NBRC 101917 / NGR234).